The chain runs to 150 residues: FCS-Like Zinc finger 15 (150 aa).

Over residues 12 to 28 (NNNNNNNNNNNNNNNKN) the composition is skewed to low complexity. The interval 12-31 (NNNNNNNNNNNNNNNKNPLS) is disordered. The FLZ-type zinc-finger motif lies at 67 to 111 (GFLEHCFLCRRKLLPAKDIYMYKGDRAFCSVECRSKQMIMDEEES). Residues 129 to 150 (SPATAPSRYRRDPRNQAGGFAY) form a disordered region.

Belongs to the FLZ family. Interacts with KIN10 and KIN11 via its FLZ-type zinc finger domain. Interacts with KINB1 and KINB3 via its N-terminal part. Forms homodimer and heterodimer with FLZ1, FLZ2 and FLZ7 in vitro.

The protein resides in the cytoplasm. The protein localises to the P-body. Functionally, may act as an adapter to facilitate the interaction of SnRK1 complex with effector proteins, conferring tissue- and stimulus-type specific differences in the SnRK1 regulation pathway. The chain is FCS-Like Zinc finger 15 from Arabidopsis thaliana (Mouse-ear cress).